A 335-amino-acid polypeptide reads, in one-letter code: 2-keto-3-deoxygluconate permease (335 aa).

10 consecutive transmembrane segments (helical) span residues 10–30, 42–62, 77–97, 100–120, 141–161, 163–183, 200–220, 224–244, 254–274, and 289–309; these read IPGG…TAAP, GIIT…GASI, LVLT…QLLP, GIEV…AMDM, AFVL…LGSA, LASF…IGFA, QTLI…GVIL, LLGI…LIIA, TAGL…VIIA, and ALVA…TAMY.

The protein belongs to the KdgT transporter family.

The protein localises to the cell inner membrane. It catalyses the reaction 2-dehydro-3-deoxy-D-gluconate(in) + H(+)(in) = 2-dehydro-3-deoxy-D-gluconate(out) + H(+)(out). Its function is as follows. Catalyzes the proton-dependent uptake of 2-keto-3-deoxygluconate (KDG) into the cell. The protein is 2-keto-3-deoxygluconate permease of Tolumonas auensis (strain DSM 9187 / NBRC 110442 / TA 4).